Here is a 168-residue protein sequence, read N- to C-terminus: SsrA-binding protein (168 aa).

Positions 1–20 are disordered; that stretch reads MAAQSKQAKPSGKQGGKKII.

The protein belongs to the SmpB family.

It localises to the cytoplasm. Required for rescue of stalled ribosomes mediated by trans-translation. Binds to transfer-messenger RNA (tmRNA), required for stable association of tmRNA with ribosomes. tmRNA and SmpB together mimic tRNA shape, replacing the anticodon stem-loop with SmpB. tmRNA is encoded by the ssrA gene; the 2 termini fold to resemble tRNA(Ala) and it encodes a 'tag peptide', a short internal open reading frame. During trans-translation Ala-aminoacylated tmRNA acts like a tRNA, entering the A-site of stalled ribosomes, displacing the stalled mRNA. The ribosome then switches to translate the ORF on the tmRNA; the nascent peptide is terminated with the 'tag peptide' encoded by the tmRNA and targeted for degradation. The ribosome is freed to recommence translation, which seems to be the essential function of trans-translation. The sequence is that of SsrA-binding protein from Mycobacterium ulcerans (strain Agy99).